Consider the following 1368-residue polypeptide: DNA-directed RNA polymerase subunit beta (1368 aa).

The protein belongs to the RNA polymerase beta chain family. The RNAP catalytic core consists of 2 alpha, 1 beta, 1 beta' and 1 omega subunit. When a sigma factor is associated with the core the holoenzyme is formed, which can initiate transcription.

The catalysed reaction is RNA(n) + a ribonucleoside 5'-triphosphate = RNA(n+1) + diphosphate. DNA-dependent RNA polymerase catalyzes the transcription of DNA into RNA using the four ribonucleoside triphosphates as substrates. The sequence is that of DNA-directed RNA polymerase subunit beta from Ralstonia pickettii (strain 12J).